The following is a 464-amino-acid chain: Bifunctional NAD(P)H-hydrate repair enzyme Nnr (464 aa).

Residues 1-205 form an NAD(P)H-hydrate epimerase region; the sequence is MEFISSRDMQ…PESFENLCGP (205 aa). The YjeF N-terminal domain maps to 9–201; the sequence is MQILDTNCEY…DIGIPESFEN (193 aa). The tract at residues 55 to 59 is NADPHX 1; for epimerase activity; it reads NNGGD. Residues Asn56 and Asp114 each coordinate K(+). Positions 118–124 are NADPHX 1; for epimerase activity; sequence GTGVRGR. Residues Tyr129 and Asp147 each contribute to the (6S)-NADPHX site. Thr150 serves as a coordination point for K(+). One can recognise a YjeF C-terminal domain in the interval 203 to 461; the sequence is CGPGDVAFSY…KAIPEAILRC (259 aa). The interval 205 to 464 is ADP-dependent (S)-NAD(P)H-hydrate dehydratase; that stretch reads PGDVAFSYKR…PEAILRCKSF (260 aa). Gly305 is a binding site for (6S)-NADPHX. The tract at residues 348 to 354 is NADPHX 2; for dehydratase activity; that stretch reads HRGEFGR. Residues 375 to 379 and 394 to 403 each bind ADP; these read KGRED and NAGMTVGGTG. Residue Asp404 coordinates (6S)-NADPHX.

The protein in the N-terminal section; belongs to the NnrE/AIBP family. It in the C-terminal section; belongs to the NnrD/CARKD family. K(+) serves as cofactor.

The catalysed reaction is (6S)-NADHX + ADP = AMP + phosphate + NADH + H(+). It catalyses the reaction (6S)-NADPHX + ADP = AMP + phosphate + NADPH + H(+). The enzyme catalyses (6R)-NADHX = (6S)-NADHX. It carries out the reaction (6R)-NADPHX = (6S)-NADPHX. Its function is as follows. Bifunctional enzyme that catalyzes the epimerization of the S- and R-forms of NAD(P)HX and the dehydration of the S-form of NAD(P)HX at the expense of ADP, which is converted to AMP. This allows the repair of both epimers of NAD(P)HX, a damaged form of NAD(P)H that is a result of enzymatic or heat-dependent hydration. In Archaeoglobus fulgidus (strain ATCC 49558 / DSM 4304 / JCM 9628 / NBRC 100126 / VC-16), this protein is Bifunctional NAD(P)H-hydrate repair enzyme Nnr (nnr).